A 479-amino-acid polypeptide reads, in one-letter code: Ribulose bisphosphate carboxylase large chain (479 aa).

A propeptide spanning residues M1 to S2 is cleaved from the precursor. Substrate is bound by residues N123 and T173. The Proton acceptor role is filled by K175. Position 177 (K177) interacts with substrate. Positions 201, 203, and 204 each coordinate Mg(2+). The residue at position 201 (K201) is an N6-carboxylysine. Phosphoserine is present on S208. The Proton acceptor role is filled by H294. The substrate site is built by R295 and H327. At T330 the chain carries Phosphothreonine. S379 lines the substrate pocket.

Belongs to the RuBisCO large chain family. Type I subfamily. Heterohexadecamer of 8 large chains and 8 small chains; disulfide-linked. The disulfide link is formed within the large subunit homodimers. Mg(2+) serves as cofactor. The disulfide bond which can form in the large chain dimeric partners within the hexadecamer appears to be associated with oxidative stress and protein turnover.

It localises to the plastid. The protein localises to the chloroplast. It carries out the reaction 2 (2R)-3-phosphoglycerate + 2 H(+) = D-ribulose 1,5-bisphosphate + CO2 + H2O. It catalyses the reaction D-ribulose 1,5-bisphosphate + O2 = 2-phosphoglycolate + (2R)-3-phosphoglycerate + 2 H(+). Its function is as follows. RuBisCO catalyzes two reactions: the carboxylation of D-ribulose 1,5-bisphosphate, the primary event in carbon dioxide fixation, as well as the oxidative fragmentation of the pentose substrate in the photorespiration process. Both reactions occur simultaneously and in competition at the same active site. The protein is Ribulose bisphosphate carboxylase large chain of Arabis hirsuta (Hairy rock-cress).